The following is a 588-amino-acid chain: WD repeat-containing protein DDB_G0349043 (588 aa).

The disordered stretch occupies residues 1–32 (MPLDNKVQLNENGKEVNNNNNNDEDLKIQDNH). The LisH domain maps to 40–72 (NRSELVRLLIQSLNSLGYDKSAEFLEKDSGISL). The region spanning 73–129 (QSKEINQFSECVVSGDWNKVEELLPFLKLNEFDTNNVKFLVYSQKFLEYLENHKIKE) is the CTLH domain. 3 WD repeats span residues 244-283 (KHRDEIWFITFSHDGQRLASSSKDNTIIIWDMSTIYLDQP), 294-333 (GHTKEVSHLSWSPNDKYLLSASNDSTVKLWNTNDGTLLKT), and 336-375 (KHSDAVTCCGWHPDNKRFVSGGNDKNIYLWSIENLDLTNS). Residues 376 to 403 (NNNNNNHNNNNSNINGNSINGSNNNGNN) form a disordered region. 4 WD repeats span residues 413–452 (WACARVNDLSIHKDGKQLIIICQEKKLRIYDLENEKTPEV), 455–494 (METDAITSMELSNDCNFALVNTSNQEIHLWDLEKQIIVQK), 499–539 (KQGR…LLET), and 542–582 (RHSG…NSFI).

This is WD repeat-containing protein DDB_G0349043 from Dictyostelium discoideum (Social amoeba).